Reading from the N-terminus, the 362-residue chain is uncharacterized protein (362 aa).

Belongs to the carbohydrate kinase PfkB family.

This is an uncharacterized protein from Escherichia coli (strain K12).